The sequence spans 261 residues: Potassium/proton antiporter CemA (261 aa).

A run of 3 helical transmembrane segments spans residues 138-158 (IISH…CLIL), 186-206 (ILLV…ELMI), and 221-241 (IISG…KYWI).

Belongs to the CemA family.

It is found in the plastid. The protein resides in the chloroplast inner membrane. It catalyses the reaction K(+)(in) + H(+)(out) = K(+)(out) + H(+)(in). Its function is as follows. Contributes to K(+)/H(+) antiport activity by supporting proton efflux to control proton extrusion and homeostasis in chloroplasts in a light-dependent manner to modulate photosynthesis. Prevents excessive induction of non-photochemical quenching (NPQ) under continuous-light conditions. Indirectly promotes efficient inorganic carbon uptake into chloroplasts. The protein is Potassium/proton antiporter CemA of Cryptomeria japonica (Japanese cedar).